A 164-amino-acid polypeptide reads, in one-letter code: UPF0304 protein YfbU (164 aa).

It belongs to the UPF0304 family.

This is UPF0304 protein YfbU from Salmonella choleraesuis (strain SC-B67).